Here is a 538-residue protein sequence, read N- to C-terminus: Putative cysteine ligase BshC (538 aa).

A coiled-coil region spans residues 248–268; that stretch reads ISKYKEVQEGLRNQQEVIKEL.

Belongs to the BshC family.

Its function is as follows. Involved in bacillithiol (BSH) biosynthesis. May catalyze the last step of the pathway, the addition of cysteine to glucosamine malate (GlcN-Mal) to generate BSH. This chain is Putative cysteine ligase BshC, found in Bacillus cereus (strain G9842).